The sequence spans 482 residues: UDP-N-acetylmuramoyl-L-alanyl-D-glutamate--2,6-diaminopimelate ligase (482 aa).

Residue Ser-29 participates in UDP-N-acetyl-alpha-D-muramoyl-L-alanyl-D-glutamate binding. 109–115 lines the ATP pocket; sequence GTNGKTS. Residues 151–152, Ser-178, and Arg-186 contribute to the UDP-N-acetyl-alpha-D-muramoyl-L-alanyl-D-glutamate site; that span reads TT. N6-carboxylysine is present on Lys-218. Meso-2,6-diaminopimelate contacts are provided by residues Arg-375, 399-402, Gly-451, and Glu-455; that span reads DNPR. Positions 399–402 match the Meso-diaminopimelate recognition motif motif; it reads DNPR.

Belongs to the MurCDEF family. MurE subfamily. Requires Mg(2+) as cofactor. Carboxylation is probably crucial for Mg(2+) binding and, consequently, for the gamma-phosphate positioning of ATP.

It is found in the cytoplasm. It catalyses the reaction UDP-N-acetyl-alpha-D-muramoyl-L-alanyl-D-glutamate + meso-2,6-diaminopimelate + ATP = UDP-N-acetyl-alpha-D-muramoyl-L-alanyl-gamma-D-glutamyl-meso-2,6-diaminopimelate + ADP + phosphate + H(+). The protein operates within cell wall biogenesis; peptidoglycan biosynthesis. Catalyzes the addition of meso-diaminopimelic acid to the nucleotide precursor UDP-N-acetylmuramoyl-L-alanyl-D-glutamate (UMAG) in the biosynthesis of bacterial cell-wall peptidoglycan. The chain is UDP-N-acetylmuramoyl-L-alanyl-D-glutamate--2,6-diaminopimelate ligase from Caldanaerobacter subterraneus subsp. tengcongensis (strain DSM 15242 / JCM 11007 / NBRC 100824 / MB4) (Thermoanaerobacter tengcongensis).